A 340-amino-acid chain; its full sequence is Ketol-acid reductoisomerase (NADP(+)) (340 aa).

Positions 3-182 (VQMEYEKDVK…GAARVGLLET (180 aa)) constitute a KARI N-terminal Rossmann domain. NADP(+) is bound by residues 26-29 (YGSQ), Arg-49, Ser-53, and 83-86 (DEIQ). His-108 is an active-site residue. Residue Gly-134 participates in NADP(+) binding. The region spanning 183 to 328 (TYKEETEEDL…AELRKAMPFV (146 aa)) is the KARI C-terminal knotted domain. Mg(2+) contacts are provided by Asp-191, Glu-195, Glu-227, and Glu-231. Ser-252 provides a ligand contact to substrate.

This sequence belongs to the ketol-acid reductoisomerase family. Requires Mg(2+) as cofactor.

The enzyme catalyses (2R)-2,3-dihydroxy-3-methylbutanoate + NADP(+) = (2S)-2-acetolactate + NADPH + H(+). It carries out the reaction (2R,3R)-2,3-dihydroxy-3-methylpentanoate + NADP(+) = (S)-2-ethyl-2-hydroxy-3-oxobutanoate + NADPH + H(+). It functions in the pathway amino-acid biosynthesis; L-isoleucine biosynthesis; L-isoleucine from 2-oxobutanoate: step 2/4. Its pathway is amino-acid biosynthesis; L-valine biosynthesis; L-valine from pyruvate: step 2/4. Functionally, involved in the biosynthesis of branched-chain amino acids (BCAA). Catalyzes an alkyl-migration followed by a ketol-acid reduction of (S)-2-acetolactate (S2AL) to yield (R)-2,3-dihydroxy-isovalerate. In the isomerase reaction, S2AL is rearranged via a Mg-dependent methyl migration to produce 3-hydroxy-3-methyl-2-ketobutyrate (HMKB). In the reductase reaction, this 2-ketoacid undergoes a metal-dependent reduction by NADPH to yield (R)-2,3-dihydroxy-isovalerate. The sequence is that of Ketol-acid reductoisomerase (NADP(+)) from Streptococcus thermophilus (strain CNRZ 1066).